Reading from the N-terminus, the 407-residue chain is Protein phosphatase methylesterase 1 (407 aa).

Positions 1–53 (MSDLQKSFAKSKLAKLPPEPPPIPESVADEDDDSGSSTETVTPSPVKQLFARP) are disordered. Residues serine 185, aspartate 211, and histidine 342 contribute to the active site. Residues 388-401 (GAGVPLGKAEGGTT) are compositionally biased toward gly residues. Positions 388–407 (GAGVPLGKAEGGTTGSFKRS) are disordered.

Belongs to the AB hydrolase superfamily.

It catalyses the reaction [phosphatase 2A protein]-C-terminal L-leucine methyl ester + H2O = [phosphatase 2A protein]-C-terminal L-leucine + methanol + H(+). Its function is as follows. Demethylates proteins that have been reversibly carboxymethylated. Demethylates the phosphatase PP2A catalytic subunit. This is Protein phosphatase methylesterase 1 (ppe1) from Emericella nidulans (strain FGSC A4 / ATCC 38163 / CBS 112.46 / NRRL 194 / M139) (Aspergillus nidulans).